We begin with the raw amino-acid sequence, 454 residues long: UPF0210 protein Memar_2269 (454 aa).

Belongs to the UPF0210 family.

The protein is UPF0210 protein Memar_2269 of Methanoculleus marisnigri (strain ATCC 35101 / DSM 1498 / JR1).